Consider the following 75-residue polypeptide: Small ribosomal subunit protein bS18 (75 aa).

This sequence belongs to the bacterial ribosomal protein bS18 family. Part of the 30S ribosomal subunit. Forms a tight heterodimer with protein bS6.

Its function is as follows. Binds as a heterodimer with protein bS6 to the central domain of the 16S rRNA, where it helps stabilize the platform of the 30S subunit. This chain is Small ribosomal subunit protein bS18, found in Pseudoalteromonas atlantica (strain T6c / ATCC BAA-1087).